The sequence spans 92 residues: Small ribosomal subunit protein uS19 (92 aa).

It belongs to the universal ribosomal protein uS19 family.

In terms of biological role, protein S19 forms a complex with S13 that binds strongly to the 16S ribosomal RNA. The protein is Small ribosomal subunit protein uS19 of Paracoccus denitrificans (strain Pd 1222).